The sequence spans 367 residues: METRAPYVLIGTFVLAAILAVFGFIYWLNNTGGIGPRTNYHVQFQGPVPGLLVGAGVLFNGIRVGEVAQLGLAPDNPRFVNATISVASATPVRADTRVGLDFQGLTGVPVVTLEGGMIVAKSGEPLTLIAEAGAGQSMTQAARDALRRVDSVLEDNSGPLKDTIANFKTFSDGLARNTGKLDGILAGLEKMTGGGAPAQKITYDLRTPQNLGPAAKTLSASLAIPEPTAVAMLQTQRMLFAPVGDNPGFADFLWADSIPKLVQARLIDSFENYDIAHAPLRTSDLGQADYQLLIDIRRFRIATDGETRVEIGLSARIVDKNGKVVASRLVETSEKLDKVEPAAAVAAFDAAFARIAKELIGWTVLAV.

A helical membrane pass occupies residues 8–28; that stretch reads VLIGTFVLAAILAVFGFIYWL.

The protein resides in the membrane. This is an uncharacterized protein from Bradyrhizobium diazoefficiens (strain JCM 10833 / BCRC 13528 / IAM 13628 / NBRC 14792 / USDA 110).